We begin with the raw amino-acid sequence, 206 residues long: Large ribosomal subunit protein uL3 (206 aa).

The segment at 127 to 151 (SGGPSSHGSKFHRHLGGTGQATTPA) is disordered.

Belongs to the universal ribosomal protein uL3 family. In terms of assembly, part of the 50S ribosomal subunit. Forms a cluster with proteins L14 and L19.

One of the primary rRNA binding proteins, it binds directly near the 3'-end of the 23S rRNA, where it nucleates assembly of the 50S subunit. In Borreliella burgdorferi (strain ZS7) (Borrelia burgdorferi), this protein is Large ribosomal subunit protein uL3.